We begin with the raw amino-acid sequence, 1194 residues long: Metabotropic glutamate receptor 1 (1194 aa).

The signal sequence occupies residues 1-18 (MVGLLLFFFPAIFLEVSL). Topologically, residues 19–592 (LPRSPGRKVL…VRYLEWSNIE (574 aa)) are extracellular. Cys67 and Cys109 are oxidised to a cystine. Tyr74 contacts L-glutamate. N-linked (GlcNAc...) asparagine glycosylation is present at Asn98. L-glutamate-binding positions include Ser165 and 186-188 (SAT). An N-linked (GlcNAc...) asparagine glycan is attached at Asn223. Tyr236 is an L-glutamate binding site. A disulfide bridge connects residues Cys289 and Cys291. Residue Asp318 participates in L-glutamate binding. The cysteines at positions 378 and 394 are disulfide-linked. A glycan (N-linked (GlcNAc...) asparagine) is linked at Asn397. Lys409 contacts L-glutamate. Cys432 and Cys439 are oxidised to a cystine. N-linked (GlcNAc...) asparagine glycosylation occurs at Asn515. A helical transmembrane segment spans residues 593–615 (SIIAIAFSCLGILVTLFVTLIFV). Topologically, residues 616-629 (LYRDTPVVKSSSRE) are cytoplasmic. The chain crosses the membrane as a helical span at residues 630 to 650 (LCYIILAGIFLGYVCPFTLIA). Residues 651–658 (KPTTTSCY) lie on the Extracellular side of the membrane. Cys657 and Cys746 are joined by a disulfide. The helical transmembrane segment at 659-680 (LQRLLVGLSSAMCYSALVTKTN) threads the bilayer. The Cytoplasmic segment spans residues 681–703 (RIARILAGSKKKICTRKPRFMSA). The chain crosses the membrane as a helical span at residues 704–727 (WAQVIIASILISVQLTLVVTLIIM). Topologically, residues 728-750 (EPPMPILSYPSIKEVYLICNTSN) are extracellular. A helical transmembrane segment spans residues 751-772 (LGVVAPLGYNGLLIMSCTYYAF). Residues 773–785 (KTRNVPANFNEAK) lie on the Cytoplasmic side of the membrane. Residues 786–807 (YIAFTMYTTCIIWLAFVPIYFG) traverse the membrane as a helical segment. Residues 808–815 (SNYKIITT) are Extracellular-facing. A helical transmembrane segment spans residues 816–840 (CFAVSLSVTVALGCMFTPKMYIIIA). Over 841-1194 (KPERNVRSAF…RDYKQSSSTL (354 aa)) the chain is Cytoplasmic. The residue at position 853 (Ser853) is a Phosphoserine. Position 871 is a phosphothreonine (Thr871). The tract at residues 883 to 905 (AGNANSNGKSVSWSEPGGGQVPK) is disordered. Over residues 885 to 895 (NANSNGKSVSW) the composition is skewed to polar residues. A phosphoserine mark is found at Ser894 and Ser969. The segment at 1007–1030 (PALPKGLPPPLQQQQQPPPQQKSL) is disordered. Residues 1012–1026 (GLPPPLQQQQQPPPQ) show a composition bias toward pro residues. Position 1091 is a phosphoserine (Ser1091). The segment at 1113-1173 (HEREGNTEED…SPVSESVLCT (61 aa)) is disordered. Acidic residues predominate over residues 1119 to 1131 (TEEDELEEEEEDL). Ser1142 bears the Phosphoserine mark. At Thr1146 the chain carries Phosphothreonine. At Ser1149 the chain carries Phosphoserine. A compositionally biased stretch (low complexity) spans 1154–1170 (SVASGSSVPSSPVSESV).

Belongs to the G-protein coupled receptor 3 family. In terms of assembly, homodimer; disulfide-linked. The PPXXF motif binds HOMER1, HOMER2 and HOMER3. Interacts with TAMALIN. Interacts with RYR1, RYR2, ITPR1, SHANK1 and SHANK3. Interacts with SIAH1. Detected in brain.

It localises to the cell membrane. The protein resides in the postsynaptic cell membrane. Its subcellular location is the cell projection. It is found in the dendrite. Signaling is inhibited by the antagonist LY341495. The LY341495 binding site partially overlaps with the glutamate binding site. Signaling is also inhibited by synthetic allosteric regulators, such as FITM (4-fluoro-N-(4-(6-(isopropylamino)pyrimidin-4-yl)thiazol-2-yl)-N-methylbenzamide) that bind in a pocket between the transmembrane helices. Its function is as follows. G-protein coupled receptor for glutamate. Ligand binding causes a conformation change that triggers signaling via guanine nucleotide-binding proteins (G proteins) and modulates the activity of down-stream effectors. Signaling activates a phosphatidylinositol-calcium second messenger system. May participate in the central action of glutamate in the CNS, such as long-term potentiation in the hippocampus and long-term depression in the cerebellum. May function in the light response in the retina. Induces GRID1 and GRID2 cation-channel activation via GNAQ-PLC-PKC pathway in dopaminergic neurons and cerebellar Purkinje cell, respectively. This is Metabotropic glutamate receptor 1 (GRM1) from Homo sapiens (Human).